Consider the following 89-residue polypeptide: Small ribosomal subunit protein uS15 (89 aa).

A compositionally biased stretch (basic and acidic residues) spans 1-18 (MSLDTAEKQKLIENHQVH). Residues 1–23 (MSLDTAEKQKLIENHQVHPTDTG) form a disordered region.

The protein belongs to the universal ribosomal protein uS15 family. In terms of assembly, part of the 30S ribosomal subunit. Forms a bridge to the 50S subunit in the 70S ribosome, contacting the 23S rRNA.

Functionally, one of the primary rRNA binding proteins, it binds directly to 16S rRNA where it helps nucleate assembly of the platform of the 30S subunit by binding and bridging several RNA helices of the 16S rRNA. Forms an intersubunit bridge (bridge B4) with the 23S rRNA of the 50S subunit in the ribosome. The sequence is that of Small ribosomal subunit protein uS15 from Prochlorococcus marinus (strain AS9601).